The sequence spans 137 residues: Large ribosomal subunit protein uL16 (137 aa).

Residues 1–20 (MLQPKRTKFRKQQKMRNRGL) are disordered.

It belongs to the universal ribosomal protein uL16 family. As to quaternary structure, part of the 50S ribosomal subunit.

In terms of biological role, binds 23S rRNA and is also seen to make contacts with the A and possibly P site tRNAs. This chain is Large ribosomal subunit protein uL16, found in Francisella philomiragia subsp. philomiragia (strain ATCC 25017 / CCUG 19701 / FSC 153 / O#319-036).